A 138-amino-acid chain; its full sequence is Putative pre-16S rRNA nuclease (138 aa).

It belongs to the YqgF nuclease family.

It localises to the cytoplasm. Its function is as follows. Could be a nuclease involved in processing of the 5'-end of pre-16S rRNA. This Escherichia coli O157:H7 protein is Putative pre-16S rRNA nuclease.